A 198-amino-acid polypeptide reads, in one-letter code: Probable molybdenum cofactor guanylyltransferase (198 aa).

GTP is bound by residues 9–11 (LAG), lysine 22, aspartate 66, and aspartate 95. Aspartate 95 is a binding site for Mg(2+).

Belongs to the MobA family. Mg(2+) serves as cofactor.

It is found in the cytoplasm. It catalyses the reaction Mo-molybdopterin + GTP + H(+) = Mo-molybdopterin guanine dinucleotide + diphosphate. Its function is as follows. Transfers a GMP moiety from GTP to Mo-molybdopterin (Mo-MPT) cofactor (Moco or molybdenum cofactor) to form Mo-molybdopterin guanine dinucleotide (Mo-MGD) cofactor. The protein is Probable molybdenum cofactor guanylyltransferase of Clostridium perfringens (strain ATCC 13124 / DSM 756 / JCM 1290 / NCIMB 6125 / NCTC 8237 / Type A).